Here is a 541-residue protein sequence, read N- to C-terminus: Paromamine 6'-oxidase (541 aa).

Residues Met-1 to Trp-29 are disordered. His-470 (proton acceptor) is an active-site residue.

This sequence belongs to the GMC oxidoreductase family. The cofactor is FAD.

It catalyses the reaction 6'''-deamino-6'''-hydroxyneomycin C + O2 = 6'''-deamino-6'''-oxoneomycin C + H2O2. It carries out the reaction paromamine + O2 = 6'-oxoparomamine + H2O2. It participates in antibiotic biosynthesis; neomycin biosynthesis. Its function is as follows. Glucosaminyl-6'-oxidase involved in the biosynthetic pathway of neomycin by mediating FAD-dependent dehydrogenation of paromamine to 6'-dehydro-6'-oxoparomamine. Works in combination with neamine transaminase to replace the 6-hydroxy group of paromamine with an amino group. Also able to collaborate with neomycin C transaminase to replace the 6'''-hydroxy group of 6'''-hydroxyneomycin C with an amino group. This is Paromamine 6'-oxidase (neoG) from Streptomyces fradiae (Streptomyces roseoflavus).